Reading from the N-terminus, the 3051-residue chain is Biorientation of chromosomes in cell division protein 1-like 1 (3051 aa).

Residues 1–33 are compositionally biased toward pro residues; the sequence is MATNPQPQPPPPAPPPPPPQPQPQPPPPPPGPG. 5 disordered regions span residues 1–47, 164–197, 215–288, 301–393, and 411–469; these read MATN…AGAG, HKEE…SANV, ASAA…CPVE, ILLN…KEDF, and VHTS…VRHA. Residues 34–47 are compositionally biased toward gly residues; that stretch reads AGPGAGGAGGAGAG. Low complexity predominate over residues 215–227; that stretch reads ASAARASTETSNA. Over residues 246–263 the composition is skewed to basic and acidic residues; sequence STDKERTSEDMADKEKST. S266 bears the Phosphoserine mark. Over residues 312-393 the composition is skewed to basic and acidic residues; that stretch reads SEQKNKSTDK…KTVEGTKEDF (82 aa). The span at 418–443 shows a compositional bias: acidic residues; it reads SFEEDTEEEVVTSDSMEEGEITSDDE. Residue K473 is modified to N6-acetyllysine. A phosphoserine mark is found at S482 and S484. 3 stretches are compositionally biased toward basic and acidic residues: residues 497-527, 549-570, and 580-653; these read IAKE…EKTK, LEPK…EKKV, and SRNV…LERE. Residues 497–1203 form a disordered region; the sequence is IAKEKEERLL…EKHADHRSTL (707 aa). Phosphoserine is present on residues S635 and S659. 2 positions are modified to phosphothreonine: T660 and T733. Composition is skewed to basic and acidic residues over residues 671-772, 804-852, 866-878, 940-966, 984-1021, and 1028-1075; these read TDTR…EENI, KDGK…KIQK, RRSE…KCDM, KPDK…KPFE, TQKD…DGHK, and SSKD…ENRR. Phosphoserine is present on S1077. Polar residues-rich tracts occupy residues 1092–1103 and 1135–1148; these read NTLSTPSGSSLQ and SKTQ…SQQD. S1145 and S1318 each carry phosphoserine. Phosphothreonine is present on T1354. 3 disordered regions span residues 1456–1550, 1700–1725, and 1760–1890; these read KLKH…QSEV, GSIS…ETEG, and VVLG…TGLG. Basic and acidic residues predominate over residues 1465–1479; the sequence is KVKDISIDVERRNEN. The segment covering 1482–1504 has biased composition (polar residues); sequence VDTSAGSGSAPSVLHQRNGQTED. Phosphoserine is present on residues S1531, S1701, and S1710. A phosphoserine mark is found at S2013, S2025, S2128, and S2203. Disordered stretches follow at residues 2189 to 2210, 2258 to 2285, 2403 to 2447, 2472 to 2519, 2615 to 2635, and 2717 to 3051; these read DFEG…STSK, TSSV…TPAE, STEE…FAGR, EDKS…AKDP, DQAS…FPEE, and VENS…KAKR. A compositionally biased stretch (low complexity) spans 2191 to 2207; sequence EGPMPSAPPEAESPLAS. Residues 2428-2439 show a composition bias toward basic and acidic residues; that stretch reads AEKEEKHGKECP. Residue S2475 is modified to Phosphoserine. The span at 2483-2492 shows a compositional bias: low complexity; that stretch reads GSSTASYSAG. Phosphoserine occurs at positions 2501 and 2618. Composition is skewed to basic and acidic residues over residues 2621-2633, 2724-2746, and 2754-2767; these read KTGD…KSFP, TNEE…KDNA, and VEAD…EERH. Residues 2780–2789 are compositionally biased toward acidic residues; sequence SEDEPDDNPD. The segment covering 2791-2822 has biased composition (basic and acidic residues); it reads LDSRIETAQRQCPETEPHDTKEENSRDLEELP. Residues 2823–2834 are compositionally biased toward polar residues; the sequence is KTSSETNSTTSR. Basic and acidic residues predominate over residues 2848 to 2864; it reads TGEKPEQNDDDTIKSQE. A compositionally biased stretch (basic residues) spans 2871–2880; it reads IKRKRGRPRK. Residues 2872–2884 constitute a DNA-binding region (a.T hook); sequence KRKRGRPRKYPVE. Positions 2896–2910 are enriched in polar residues; it reads DTGIVTVEQSPSSSK. 2 positions are modified to phosphoserine: S2905 and S2907. A compositionally biased stretch (basic residues) spans 2944 to 2953; sequence VRRRGRKPKR. Phosphoserine is present on S2954. Residue T2956 is modified to Phosphothreonine. 3 positions are modified to phosphoserine: S2958, S2964, and S2973. Glycyl lysine isopeptide (Lys-Gly) (interchain with G-Cter in ubiquitin) cross-links involve residues K2981 and K2982. Over residues 2985 to 2998 the composition is skewed to acidic residues; it reads ESDEEEEEEEEDEP. Residues S2986 and S3019 each carry the phosphoserine modification. Positions 3000-3020 are enriched in polar residues; sequence GATTRSTTRSEAQRSKTQLSP. A compositionally biased stretch (basic and acidic residues) spans 3039-3051; sequence QRVEEAPVKKAKR.

It belongs to the BOD1 family. In terms of assembly, interacts (via COMPASS-Shg1 domain) with SETD1A at stalled replication forks; this interaction mediates FANCD2-dependent nucleosome remodeling at reversed forks protecting them from nucleolytic degradation.

It is found in the chromosome. In terms of biological role, component of the fork protection machinery required to protect stalled/damaged replication forks from uncontrolled DNA2-dependent resection. Acts by stabilizing RAD51 at stalled replication forks and protecting RAD51 nucleofilaments from the antirecombinogenic activities of FBH1 and BLM. Does not regulate spindle orientation. The protein is Biorientation of chromosomes in cell division protein 1-like 1 of Homo sapiens (Human).